The following is an 802-amino-acid chain: DEAD-box ATP-dependent RNA helicase 28 (802 aa).

The segment at 1 to 179 is disordered; the sequence is MDADFRFDPD…TDKKSGVVDP (179 aa). Acidic residues-rich tracts occupy residues 76 to 131 and 138 to 169; these read GDSE…EELE and KSDE…EEEE. 2 coiled-coil regions span residues 90-122 and 149-174; these read DSEE…GVEV and QDGE…DKKS. The Q motif signature appears at 194–222; sequence NSFLELNLSRPLLRACEALGYQKPTPIQA. Positions 225 to 399 constitute a Helicase ATP-binding domain; sequence IPLALTGRDI…TLSLNKPVRL (175 aa). 238-245 lines the ATP pocket; sequence AITGSGKT. The short motif at 347 to 350 is the DEAD box element; that stretch reads DEAD. Residues 429-573 form the Helicase C-terminal domain; it reads VLLALCLKTF…SRIVAEKPVA (145 aa). A coiled-coil region spans residues 572-616; sequence VAECAKLIEELEDQISTIIQEEREERILRKAEMEATKAENMIAHK. A disordered region spans residues 639–802; sequence KAAKESTSQG…KSKSRYNRRK (164 aa). A compositionally biased stretch (polar residues) spans 644–659; the sequence is STSQGKSNSGVISAQQ. Over residues 666 to 684 the composition is skewed to basic residues; that stretch reads KEKKRREREKNLPRKKRRR. Positions 671 to 712 form a coiled coil; that stretch reads REREKNLPRKKRRRLEAEREMLEDESEDEEEAKESKGGKKEK. Residues 691–702 are compositionally biased toward acidic residues; it reads MLEDESEDEEEA. Positions 776–802 are enriched in basic residues; sequence RSLKKNNVMRKKSKNSFKSKSRYNRRK.

The protein belongs to the DEAD box helicase family. DDX27/DRS1 subfamily.

It carries out the reaction ATP + H2O = ADP + phosphate + H(+). The sequence is that of DEAD-box ATP-dependent RNA helicase 28 from Oryza sativa subsp. japonica (Rice).